A 336-amino-acid chain; its full sequence is Protein-glutamate methylesterase/protein-glutamine glutaminase 1 (336 aa).

In terms of domain architecture, Response regulatory spans 2–119 (KIAIVNDMPL…GNPQEAAAPL (118 aa)). Asp53 carries the post-translational modification 4-aspartylphosphate. The 190-residue stretch at 147 to 336 (TASRQRLVAI…APRLLEIFPK (190 aa)) folds into the CheB-type methylesterase domain. Residues Ser159, His186, and Asp279 contribute to the active site.

The protein belongs to the CheB family. Phosphorylated by CheA. Phosphorylation of the N-terminal regulatory domain activates the methylesterase activity.

It is found in the cytoplasm. It carries out the reaction [protein]-L-glutamate 5-O-methyl ester + H2O = L-glutamyl-[protein] + methanol + H(+). It catalyses the reaction L-glutaminyl-[protein] + H2O = L-glutamyl-[protein] + NH4(+). Involved in chemotaxis. Part of a chemotaxis signal transduction system that modulates chemotaxis in response to various stimuli. Catalyzes the demethylation of specific methylglutamate residues introduced into the chemoreceptors (methyl-accepting chemotaxis proteins or MCP) by CheR. Also mediates the irreversible deamidation of specific glutamine residues to glutamic acid. This Pseudomonas fluorescens (strain Pf0-1) protein is Protein-glutamate methylesterase/protein-glutamine glutaminase 1.